A 169-amino-acid polypeptide reads, in one-letter code: S-ribosylhomocysteine lyase (169 aa).

Histidine 54, histidine 58, and cysteine 128 together coordinate Fe cation.

This sequence belongs to the LuxS family. In terms of assembly, homodimer. It depends on Fe cation as a cofactor.

The catalysed reaction is S-(5-deoxy-D-ribos-5-yl)-L-homocysteine = (S)-4,5-dihydroxypentane-2,3-dione + L-homocysteine. Functionally, involved in the synthesis of autoinducer 2 (AI-2) which is secreted by bacteria and is used to communicate both the cell density and the metabolic potential of the environment. The regulation of gene expression in response to changes in cell density is called quorum sensing. Catalyzes the transformation of S-ribosylhomocysteine (RHC) to homocysteine (HC) and 4,5-dihydroxy-2,3-pentadione (DPD). The protein is S-ribosylhomocysteine lyase of Shewanella sp. (strain MR-7).